The following is a 148-amino-acid chain: Receptor activity-modifying protein 1 (148 aa).

Residues 1 to 26 (MARALCRLPRRGLWLLLAHHLFMTTA) form the signal peptide. Cystine bridges form between Cys-27/Cys-82, Cys-40/Cys-72, and Cys-57/Cys-104. At 27–118 (CQEANYGALL…RAVRDPPGSI (92 aa)) the chain is on the extracellular side. Residues 119–140 (LYPFIVVPITVTLLVTALVVWQ) form a helical membrane-spanning segment. Over 141-148 (SKRTEGIV) the chain is Cytoplasmic.

It belongs to the RAMP family. Heterodimer of CALCRL and RAMP1; the interaction induces allosteric modulation of CALCRL function and CGRP1/CALCA and CGRP2/CALCB ligand specificity. Heterodimer of CALCR and RAMP1; interaction forms the AMYR1 receptor complex for amylin/IAPP and CGRP1/CALCA ligands. Expressed in many tissues including the uterus, bladder, brain, pancreas and gastro-intestinal tract.

Its subcellular location is the cell membrane. In terms of biological role, accessory protein that interacts with and modulates the function of G-protein coupled receptors including calcitonin gene-related peptide type 1 receptor (CALCRL) and calcitonin receptor (CALCR). Required for the transport of CALCRL to the plasma membrane. Together with CALCRL, form the receptor complex for the calcitonin gene-related peptides CGRP1/CALCA and CGRP2/CALCB. Together with CALCR, form the AMYR1 receptor complex for amylin/IAPP and CGRP1/CALCA. The protein is Receptor activity-modifying protein 1 of Homo sapiens (Human).